A 263-amino-acid chain; its full sequence is 4-hydroxy-2-oxo-heptane-1,7-dioate aldolase (263 aa).

H45 (proton acceptor) is an active-site residue. Q147 is a binding site for substrate. E149 provides a ligand contact to a divalent metal cation. Substrate contacts are provided by A174 and D175. D175 contacts a divalent metal cation.

This sequence belongs to the HpcH/HpaI aldolase family. Homohexamer; trimer of dimers. A divalent metal cation is required as a cofactor.

The enzyme catalyses 4-hydroxy-2-oxoheptanedioate = succinate semialdehyde + pyruvate. Its pathway is aromatic compound metabolism; 4-hydroxyphenylacetate degradation; pyruvate and succinate semialdehyde from 4-hydroxyphenylacetate: step 7/7. In terms of biological role, catalyzes the reversible retro-aldol cleavage of 4-hydroxy-2-ketoheptane-1,7-dioate (HKHD) to pyruvate and succinic semialdehyde. The sequence is that of 4-hydroxy-2-oxo-heptane-1,7-dioate aldolase from Salmonella enteritidis PT4 (strain P125109).